The sequence spans 161 residues: Transcription elongation factor GreA (161 aa).

Residues 46–71 (AEYTAAKEKQSFLHGKLQELENNLAL) are a coiled coil.

It belongs to the GreA/GreB family.

Necessary for efficient RNA polymerase transcription elongation past template-encoded arresting sites. The arresting sites in DNA have the property of trapping a certain fraction of elongating RNA polymerases that pass through, resulting in locked ternary complexes. Cleavage of the nascent transcript by cleavage factors such as GreA or GreB allows the resumption of elongation from the new 3'terminus. GreA releases sequences of 2 to 3 nucleotides. This Syntrophus aciditrophicus (strain SB) protein is Transcription elongation factor GreA.